The following is a 414-amino-acid chain: Gamma-glutamyl phosphate reductase (414 aa).

The protein belongs to the gamma-glutamyl phosphate reductase family.

The protein resides in the cytoplasm. It catalyses the reaction L-glutamate 5-semialdehyde + phosphate + NADP(+) = L-glutamyl 5-phosphate + NADPH + H(+). The protein operates within amino-acid biosynthesis; L-proline biosynthesis; L-glutamate 5-semialdehyde from L-glutamate: step 2/2. Its function is as follows. Catalyzes the NADPH-dependent reduction of L-glutamate 5-phosphate into L-glutamate 5-semialdehyde and phosphate. The product spontaneously undergoes cyclization to form 1-pyrroline-5-carboxylate. This is Gamma-glutamyl phosphate reductase from Clostridium beijerinckii (strain ATCC 51743 / NCIMB 8052) (Clostridium acetobutylicum).